A 483-amino-acid polypeptide reads, in one-letter code: Siroheme synthase (483 aa).

The tract at residues 1-203 is precorrin-2 dehydrogenase /sirohydrochlorin ferrochelatase; that stretch reads MNYFPIFANL…RQNTLAEREL (203 aa). NAD(+) is bound by residues 22-23 and 43-44; these read AV and KH. S128 is subject to Phosphoserine. Residues 214–483 form a uroporphyrinogen-III C-methyltransferase region; the sequence is GFVSLVGAGP…LGTGQEQQAA (270 aa). P223 contributes to the S-adenosyl-L-methionine binding site. The Proton acceptor role is filled by D246. K268 (proton donor) is an active-site residue. S-adenosyl-L-methionine is bound by residues 299-301, V304, 329-330, M381, and G410; these read GGD and TA.

The protein in the N-terminal section; belongs to the precorrin-2 dehydrogenase / sirohydrochlorin ferrochelatase family. In the C-terminal section; belongs to the precorrin methyltransferase family.

It carries out the reaction uroporphyrinogen III + 2 S-adenosyl-L-methionine = precorrin-2 + 2 S-adenosyl-L-homocysteine + H(+). The enzyme catalyses precorrin-2 + NAD(+) = sirohydrochlorin + NADH + 2 H(+). It catalyses the reaction siroheme + 2 H(+) = sirohydrochlorin + Fe(2+). It functions in the pathway cofactor biosynthesis; adenosylcobalamin biosynthesis; precorrin-2 from uroporphyrinogen III: step 1/1. It participates in cofactor biosynthesis; adenosylcobalamin biosynthesis; sirohydrochlorin from precorrin-2: step 1/1. Its pathway is porphyrin-containing compound metabolism; siroheme biosynthesis; precorrin-2 from uroporphyrinogen III: step 1/1. The protein operates within porphyrin-containing compound metabolism; siroheme biosynthesis; siroheme from sirohydrochlorin: step 1/1. It functions in the pathway porphyrin-containing compound metabolism; siroheme biosynthesis; sirohydrochlorin from precorrin-2: step 1/1. In terms of biological role, multifunctional enzyme that catalyzes the SAM-dependent methylations of uroporphyrinogen III at position C-2 and C-7 to form precorrin-2 via precorrin-1. Then it catalyzes the NAD-dependent ring dehydrogenation of precorrin-2 to yield sirohydrochlorin. Finally, it catalyzes the ferrochelation of sirohydrochlorin to yield siroheme. The chain is Siroheme synthase from Neisseria meningitidis serogroup C / serotype 2a (strain ATCC 700532 / DSM 15464 / FAM18).